A 357-amino-acid chain; its full sequence is Beta-hexosaminidase (357 aa).

Substrate is bound by residues D66, R74, R140, and 170 to 171 (KH). The Proton donor/acceptor role is filled by H183. Catalysis depends on D254, which acts as the Nucleophile.

This sequence belongs to the glycosyl hydrolase 3 family. NagZ subfamily.

The protein resides in the cytoplasm. It catalyses the reaction Hydrolysis of terminal non-reducing N-acetyl-D-hexosamine residues in N-acetyl-beta-D-hexosaminides.. It participates in cell wall biogenesis; peptidoglycan recycling. In terms of biological role, plays a role in peptidoglycan recycling by cleaving the terminal beta-1,4-linked N-acetylglucosamine (GlcNAc) from peptide-linked peptidoglycan fragments, giving rise to free GlcNAc, anhydro-N-acetylmuramic acid and anhydro-N-acetylmuramic acid-linked peptides. In Chromobacterium violaceum (strain ATCC 12472 / DSM 30191 / JCM 1249 / CCUG 213 / NBRC 12614 / NCIMB 9131 / NCTC 9757 / MK), this protein is Beta-hexosaminidase.